A 499-amino-acid chain; its full sequence is Sensor histidine kinase PdtaS (499 aa).

The GAF stretch occupies residues 4-149; that stretch reads LGDLLAEHTM…PLEGAYLDCA (146 aa). A PAS-like region spans residues 178–289; the sequence is DGFIRLNEGG…TEVKRRDRAL (112 aa). The Histidine kinase domain maps to 298–493; the sequence is EIHHRVKNNL…DVVLRVPIGR (196 aa). His-301 bears the Phosphohistidine; by autocatalysis mark.

Post-translationally, autophosphorylated.

Its subcellular location is the cytoplasm. It carries out the reaction ATP + protein L-histidine = ADP + protein N-phospho-L-histidine.. Member of the two-component regulatory system PdtaR/PdtaS. This two-component system plays an essential role in mycobacterial adaptation to poor nutrient conditions. Nutrient deprivation results in increasing intracellular concentrations of cyclic diguanosine monophosphate (c-di-GMP), which binds to the PdtaS sensor and promotes its autophosphorylation, leading to the activation of the signaling cascade. The phosphate group is then transferred to PdtaR. This is Sensor histidine kinase PdtaS from Mycolicibacterium smegmatis (strain ATCC 700084 / mc(2)155) (Mycobacterium smegmatis).